A 350-amino-acid chain; its full sequence is Induced myeloid leukemia cell differentiation protein Mcl-1 (350 aa).

Glycyl lysine isopeptide (Lys-Gly) (interchain with G-Cter in ubiquitin) cross-links involve residues Lys-5 and Lys-40. The tract at residues 47 to 87 (EIGGGEAGAVIGGSAGASPPSTLTPDSRRVARPPPIGAEVP) is disordered. A compositionally biased stretch (gly residues) spans 50–61 (GGEAGAVIGGSA). A PEST-like region spans residues 104 to 175 (RAAPLEEMEA…PAEEEEDELY (72 aa)). Residue Ser-121 is modified to Phosphoserine. Residue Lys-136 forms a Glycyl lysine isopeptide (Lys-Gly) (interchain with G-Cter in ubiquitin) linkage. The segment at 148-171 (GESGNNTSTDGSLPSTPPPAEEEE) is disordered. Residues 150–161 (SGNNTSTDGSLP) show a composition bias toward polar residues. Position 159 is a phosphoserine; by GSK3-alpha and GSK3-beta (Ser-159). Ser-162 carries the post-translational modification Phosphoserine. Phosphothreonine; by MAPK is present on Thr-163. Glycyl lysine isopeptide (Lys-Gly) (interchain with G-Cter in ubiquitin) cross-links involve residues Lys-194 and Lys-197. The short motif at 209–223 (ALETLRRVGDGVQRN) is the BH3 element. A BH1 motif is present at residues 252–272 (HVFSDGVTNWGRIVTLISFGA). The BH2 signature appears at 304 to 319 (DWLVKQRGWDGFVEFF). A helical membrane pass occupies residues 328-348 (IRNVLLAFAGVAGVGAGLAYL).

This sequence belongs to the Bcl-2 family. Interacts with HIF3A (via C-terminus domain). Interacts with BAD, BOK, BIK and BMF. Interacts with PMAIP1. Interacts with BBC3. Isoform 1 interacts with BAX, BAK1 and TPT1. Heterodimer of isoform 1 and isoform 2. Homodimers of isoform 1 or isoform 2 are not detected. Isoform 2 does not interact with pro-apoptotic BCL2-related proteins. Interacts with RTL10/BOP. Interacts with BCL2L11; may sequester BCL2L11 to prevent its pro-apoptotic activity. Interacts with GIMAP5 and HSPA8/HSC70; the interaction between HSPA8 and MCL1 is impaired in the absence of GIMAP5. Post-translationally, cleaved by CASP3 during apoptosis. In intact cells cleavage occurs preferentially after Asp-127, yielding a pro-apoptotic 28 kDa C-terminal fragment. Rapidly degraded in the absence of phosphorylation on Thr-163 in the PEST region. In terms of processing, phosphorylated on Ser-159, by GSK3, in response to IL3/interleukin-3 withdrawal. Phosphorylation at Ser-159 induces ubiquitination and proteasomal degradation, abrogating the anti-apoptotic activity. Treatment with taxol or okadaic acid induces phosphorylation on additional sites. Post-translationally, ubiquitinated. Ubiquitination is induced by phosphorylation at Ser-159. Deubiquitinated by USP20; leading to increased stability.

It localises to the membrane. It is found in the cytoplasm. The protein resides in the mitochondrion. Its subcellular location is the nucleus. The protein localises to the nucleoplasm. Involved in the regulation of apoptosis versus cell survival, and in the maintenance of viability but not of proliferation. Mediates its effects by interactions with a number of other regulators of apoptosis. Isoform 1 inhibits apoptosis. Isoform 2 promotes apoptosis. The sequence is that of Induced myeloid leukemia cell differentiation protein Mcl-1 (MCL1) from Homo sapiens (Human).